We begin with the raw amino-acid sequence, 215 residues long: Putative serine/threonine-protein kinase YrzF (215 aa).

The region spanning 27–215 is the Protein kinase domain; it reads SEELTLIGKG…HFAQRKRKYS (189 aa). ATP contacts are provided by residues 33–41 and Lys54; that span reads IGKGRSAYV. Asp135 functions as the Proton acceptor in the catalytic mechanism.

It belongs to the protein kinase superfamily. Ser/Thr protein kinase family.

It carries out the reaction L-seryl-[protein] + ATP = O-phospho-L-seryl-[protein] + ADP + H(+). The enzyme catalyses L-threonyl-[protein] + ATP = O-phospho-L-threonyl-[protein] + ADP + H(+). The polypeptide is Putative serine/threonine-protein kinase YrzF (yrzF) (Bacillus subtilis (strain 168)).